A 264-amino-acid polypeptide reads, in one-letter code: MRKLFSFGRRLGQALLDSMDQEYAGRGYHIRDWELRKIHRAAIKGDAAEVEHCLTRRFRDLDARDRKDRTVLHLTCAHGRVEVVTLLLSRRCQINIYDRLNRTPLMKAVHCQEEACAIILLEHGANPNIKDIYSNTALHYAVYNKGTSLAEKLLSHHANIEALNEEGNTPLLFAINSRRQQIVEFLLKNQANLHAIDNFRRTALMLAVQHNSSSIVSLLLQQNINIFSQDLFGQTAEDYAVCYNFRSIQQQILEHKNKILKSHL.

ANK repeat units follow at residues 67–96 (KDRT…QINI), 100–129 (LNRT…NPNI), 133–162 (YSNT…NIEA), 166–195 (EGNT…NLHA), and 199–228 (FRRT…NIFS).

The polypeptide is Putative ankyrin repeat domain-containing protein 19 (ANKRD19P) (Homo sapiens (Human)).